Reading from the N-terminus, the 122-residue chain is Holo-[acyl-carrier-protein] synthase (122 aa).

Mg(2+)-binding residues include Asp8 and Glu60.

Belongs to the P-Pant transferase superfamily. AcpS family. It depends on Mg(2+) as a cofactor.

It localises to the cytoplasm. The enzyme catalyses apo-[ACP] + CoA = holo-[ACP] + adenosine 3',5'-bisphosphate + H(+). Its function is as follows. Transfers the 4'-phosphopantetheine moiety from coenzyme A to a Ser of acyl-carrier-protein. This Anaplasma phagocytophilum (strain HZ) protein is Holo-[acyl-carrier-protein] synthase.